The following is a 127-amino-acid chain: Chorismate mutase AroH (127 aa).

In terms of domain architecture, Chorismate mutase aroH-type spans 3-121 (IRGIRGATTV…VVVLRPDLSL (119 aa)). Prephenate-binding positions include Arg-7, 74–78 (TCMQE), Arg-90, and Tyr-108.

Homotrimer.

The protein resides in the cytoplasm. The catalysed reaction is chorismate = prephenate. The protein operates within metabolic intermediate biosynthesis; prephenate biosynthesis; prephenate from chorismate: step 1/1. Catalyzes the Claisen rearrangement of chorismate to prephenate. Probably involved in the aromatic amino acid biosynthesis. The sequence is that of Chorismate mutase AroH from Bacillus subtilis (strain 168).